The following is a 232-amino-acid chain: tRNA (guanine-N(1)-)-methyltransferase (232 aa).

Residues G112 and 132 to 137 (IGDYVL) contribute to the S-adenosyl-L-methionine site.

It belongs to the RNA methyltransferase TrmD family. Homodimer.

It is found in the cytoplasm. The catalysed reaction is guanosine(37) in tRNA + S-adenosyl-L-methionine = N(1)-methylguanosine(37) in tRNA + S-adenosyl-L-homocysteine + H(+). Functionally, specifically methylates guanosine-37 in various tRNAs. The protein is tRNA (guanine-N(1)-)-methyltransferase of Anaplasma phagocytophilum (strain HZ).